The following is a 430-amino-acid chain: MATLSVKPSRRFQLPDWHTNSYLLSTNAQLQRDASHQIRQEARVLRNETNNQTIWDEHDNRTRLVERIDTVNRWKEMLDKCLTDLDAEIDALTQMKESAEQNLQAKNLPLDVAIECLTLRESRRDIDVVKDPVEDELHKEVEVIEATKKALQQKVSQAFEQLCLLQEVQQQLNSDHRGKMETLEIDRGCLSLNLRSPNISLKVDPTRVPDGSTTLQQWDDFSRFNKDRAEAEMKAATELREATALTIAETNNELEAQRVATEFAFRKRLREMEKVYSELKWQEKNTLEEIAELQEDIRHLEEDLRTKLLSLKLSHTRLEARTYRPNVELCRDQAQYGLTDEVHQLEATIAALKQKLAQAQDALDALCKHLARLQADIACKANSMLLDTKCMDTRRKLTVPAERFVPEVDTFTRTTNSTLSPLKSCQLELA.

Coiled coils occupy residues 80 to 162 (KCLT…FEQL) and 225 to 382 (NKDR…CKAN).

Belongs to the tektin family. Microtubule inner protein component of sperm flagellar doublet microtubules. May interact with CCDC172. In terms of processing, tyrosine phosphorylated. Ubiquitinated, leading to its degradation. Deubiquitinated by USP16, promoting its stability. Expressed at high levels in testis, trachea and fetal lung, and at lower levels in ovary, pituitary, adult lung, fetal brain and fetal kidney.

It is found in the cytoplasm. The protein resides in the cytoskeleton. Its subcellular location is the cilium axoneme. The protein localises to the flagellum axoneme. It localises to the microtubule organizing center. In terms of biological role, microtubule inner protein (MIP) part of the dynein-decorated doublet microtubules (DMTs) in cilia and flagellar axoneme. Plays a key role in the assembly or attachment of the inner dynein arm to microtubules in sperm flagella and tracheal cilia. Forms filamentous polymers in the walls of ciliary and flagellar microtubules. The chain is Tektin-2 from Homo sapiens (Human).